The primary structure comprises 119 residues: Immunoglobulin lambda variable 2-11 (119 aa).

The N-terminal stretch at methionine 1–alanine 19 is a signal peptide. Glutamine 20 carries the pyrrolidone carboxylic acid modification. A framework-1 region spans residues glutamine 20–threonine 44. An Ig-like domain is found at glutamine 20–histidine 119. An intrachain disulfide couples cysteine 41 to cysteine 109. A complementarity-determining-1 region spans residues serine 45–tyrosine 53. Positions valine 54–tyrosine 70 are framework-2. The segment at aspartate 71 to serine 73 is complementarity-determining-2. The tract at residues lysine 74–cysteine 109 is framework-3. Residues cysteine 110–histidine 119 are complementarity-determining-3.

In terms of assembly, immunoglobulins are composed of two identical heavy chains and two identical light chains; disulfide-linked.

Its subcellular location is the secreted. It localises to the cell membrane. Functionally, v region of the variable domain of immunoglobulin light chains that participates in the antigen recognition. Immunoglobulins, also known as antibodies, are membrane-bound or secreted glycoproteins produced by B lymphocytes. In the recognition phase of humoral immunity, the membrane-bound immunoglobulins serve as receptors which, upon binding of a specific antigen, trigger the clonal expansion and differentiation of B lymphocytes into immunoglobulins-secreting plasma cells. Secreted immunoglobulins mediate the effector phase of humoral immunity, which results in the elimination of bound antigens. The antigen binding site is formed by the variable domain of one heavy chain, together with that of its associated light chain. Thus, each immunoglobulin has two antigen binding sites with remarkable affinity for a particular antigen. The variable domains are assembled by a process called V-(D)-J rearrangement and can then be subjected to somatic hypermutations which, after exposure to antigen and selection, allow affinity maturation for a particular antigen. The chain is Immunoglobulin lambda variable 2-11 from Homo sapiens (Human).